The following is a 480-amino-acid chain: Phosphomethylpyrimidine synthase (480 aa).

Residues Asn-66, Met-95, Tyr-124, His-159, 179–181 (SRG), 220–223 (DGLR), and Glu-259 contribute to the substrate site. Residue His-263 coordinates Zn(2+). Tyr-286 is a binding site for substrate. His-327 lines the Zn(2+) pocket. Residues Cys-407, Cys-410, and Cys-415 each contribute to the [4Fe-4S] cluster site. Positions 426–480 (DGDMESIEADADDRTPLEDSSAAAVNRPPVGTHDGADIPGPDADMPADTEGSADD) are disordered. Residues 470–480 (MPADTEGSADD) are compositionally biased toward acidic residues.

The protein belongs to the ThiC family. Requires [4Fe-4S] cluster as cofactor.

It carries out the reaction 5-amino-1-(5-phospho-beta-D-ribosyl)imidazole + S-adenosyl-L-methionine = 4-amino-2-methyl-5-(phosphooxymethyl)pyrimidine + CO + 5'-deoxyadenosine + formate + L-methionine + 3 H(+). The protein operates within cofactor biosynthesis; thiamine diphosphate biosynthesis. Functionally, catalyzes the synthesis of the hydroxymethylpyrimidine phosphate (HMP-P) moiety of thiamine from aminoimidazole ribotide (AIR) in a radical S-adenosyl-L-methionine (SAM)-dependent reaction. The polypeptide is Phosphomethylpyrimidine synthase (Haloarcula marismortui (strain ATCC 43049 / DSM 3752 / JCM 8966 / VKM B-1809) (Halobacterium marismortui)).